The sequence spans 909 residues: MKKRRKVTSNLEKIHLGYHKDSSEGNVAVECDQVTYTHSAGRPTPEALHCYQELPPSPDQRKLLSSLQYNKNLLKYLNDDRQKQPSFCDLLIIVEGKEFSAHKVVVAVGSSYFHACLSKNPSTDVVTLDHVTHSVFQHLLEFLYTSEFFVYKYEIPLVLEAAKFLDIIDAVKLLNNENVAPFHSELTEKSSPEETLNELTGRLSNNHQCKFCSRHFCYKKSLENHLAKTHRSLLLGKKHGLKMLERSFSARRSKRNRKCPVKFDDTSDDEQESGDGSDNLNQENFDKEKSDRNDSEDPGSEYNAEEDELEEEMSDEYSDIEEQSEKDHNDAEEEPEAGDSVGNVHEGLTPVVIQNSNKKILQCPKCDKTFDRIGKYESHTRVHTGEKPFECDICHQRYSTKSNLTVHRKKHSNETEFHKKEHKCPYCNKLHASKKTLAKHVKRFHPENAQEFISIKKTKSESWKCDICKKSFTRRPHLEEHMILHSQDKPFKCTYCEEHFKSRFARLKHQEKFHLGPFPCDICGRQFNDTGNLKRHIECTHGGKRKWTCFICGKSVRERTTLKEHLRIHSGEKPHLCSICGQSFRHGSSYRLHLRVHHDDKRYECDECGKTFIRHDHLTKHKKIHSGEKAHQCEECGKCFGRRDHLTVHYKSVHLGEKVWQKYKATFHQCDVCKKIFKGKSSLEMHFRTHSGEKPYKCQICNQSFRIKKTLTKHLVIHSDARPFNCQHCNATFKRKDKLKYHIDHVHEIKSPDDPLSTSEEKLVSLPVEYSSDDKIFQTETKQYMDQPKVYQSEAKTMLQNVSAEVCVPVTLVPVQMPDTPSDLVRHTTTLPPSSHEILSPQPQSTDYPRAADLAFLEKYTLTPQPANIVHPVRPEQMLDPREQSYLGTLLGLDSTTGVQNISTNEHHS.

The 65-residue stretch at 88–152 (CDLLIIVEGK…LYTSEFFVYK (65 aa)) folds into the BTB domain. The C2H2-type 1 zinc finger occupies 207–230 (HQCKFCSRHFCYKKSLENHLAKTH). The tract at residues 252–344 (RSKRNRKCPV…PEAGDSVGNV (93 aa)) is disordered. Acidic residues predominate over residues 266–275 (TSDDEQESGD). The segment covering 284–295 (NFDKEKSDRNDS) has biased composition (basic and acidic residues). A compositionally biased stretch (acidic residues) spans 296–322 (EDPGSEYNAEEDELEEEMSDEYSDIEE). 13 C2H2-type zinc fingers span residues 361–383 (LQCP…TRVH), 389–411 (FECD…RKKH), 422–445 (HKCP…KRFH), 463–485 (WKCD…MILH), 491–514 (FKCT…EKFH), 518–541 (FPCD…ECTH), 547–569 (WTCF…LRIH), 575–597 (HLCS…LRVH), 603–625 (YECD…KKIH), 631–654 (HQCE…KSVH), 668–690 (HQCD…FRTH), 696–718 (YKCQ…LVIH), and 724–747 (FNCQ…DHVH).

It localises to the nucleus. In terms of biological role, may be involved in transcriptional regulation. This chain is Zinc finger and BTB domain-containing protein 41 (ZBTB41), found in Homo sapiens (Human).